We begin with the raw amino-acid sequence, 203 residues long: Recombination protein RecR (203 aa).

The C4-type zinc-finger motif lies at 57 to 73 (CQSCGTLKSNSLGCNNC). One can recognise a Toprim domain in the interval 81–175 (NKICVVEDIA…KVTKLAQGLP (95 aa)).

Belongs to the RecR family.

Its function is as follows. May play a role in DNA repair. It seems to be involved in an RecBC-independent recombinational process of DNA repair. It may act with RecF and RecO. The chain is Recombination protein RecR from Pelagibacter ubique (strain HTCC1062).